Here is a 417-residue protein sequence, read N- to C-terminus: Exodeoxyribonuclease 7 large subunit (417 aa).

The protein belongs to the XseA family. As to quaternary structure, heterooligomer composed of large and small subunits.

It localises to the cytoplasm. It catalyses the reaction Exonucleolytic cleavage in either 5'- to 3'- or 3'- to 5'-direction to yield nucleoside 5'-phosphates.. Bidirectionally degrades single-stranded DNA into large acid-insoluble oligonucleotides, which are then degraded further into small acid-soluble oligonucleotides. In Corynebacterium glutamicum (strain ATCC 13032 / DSM 20300 / JCM 1318 / BCRC 11384 / CCUG 27702 / LMG 3730 / NBRC 12168 / NCIMB 10025 / NRRL B-2784 / 534), this protein is Exodeoxyribonuclease 7 large subunit.